We begin with the raw amino-acid sequence, 472 residues long: MKSILDGLADTTFRTITTDLLYVGSNDIQYEDIKGDMASKLGYFPQKFPLTSFRGSPFQEKMTAGDNPQLVPADQVNITEFYNKSLSSFKENEENIQCGENFMDIECFMVLNPSQQLAIAVLSLTLGTFTVLENLLVLCVILHSRSLRCRPSYHFIGSLAVADLLGSVIFVYSFIDFHVFHRKDSRNVFLFKLGGVTASFTASVGSLFLTAIDRYISIHRPLAYKRIVTRPKAVVAFCLMWTIAIVIAVLPLLGWNCEKLQSVCSDIFPHIDETYLMFWIGVTSVLLLFIVYAYMYILWKAHSHAVRMIQRGTQKSIIIHTSEDGKVQVTRPDQARMDIRLAKTLVLILVVLIICWGPLLAIMVYDVFGKMNKLIKTVFAFCSMLCLLNSTVNPIIYALRSKDLRHAFRSMFPSCEGTAQPLDNSMGDSDCLHKHANNAASVHRAAESCIKSTVKIAKVTMSVSTDTSAEAL.

The Extracellular segment spans residues 1–116; the sequence is MKSILDGLAD…CFMVLNPSQQ (116 aa). The tract at residues 2–23 is required for mitochondrial localization; that stretch reads KSILDGLADTTFRTITTDLLYV. N-linked (GlcNAc...) asparagine glycans are attached at residues N77 and N83. The helical transmembrane segment at 117–142 threads the bilayer; sequence LAIAVLSLTLGTFTVLENLLVLCVIL. The Cytoplasmic segment spans residues 143–154; the sequence is HSRSLRCRPSYH. Residues 155-175 form a helical membrane-spanning segment; that stretch reads FIGSLAVADLLGSVIFVYSFI. Residues 176–187 are Extracellular-facing; the sequence is DFHVFHRKDSRN. Residues 188-212 traverse the membrane as a helical segment; sequence VFLFKLGGVTASFTASVGSLFLTAI. The Cytoplasmic portion of the chain corresponds to 213–232; it reads DRYISIHRPLAYKRIVTRPK. A helical membrane pass occupies residues 233 to 255; the sequence is AVVAFCLMWTIAIVIAVLPLLGW. Topologically, residues 256 to 273 are extracellular; sequence NCEKLQSVCSDIFPHIDE. Residues 274-299 traverse the membrane as a helical segment; the sequence is TYLMFWIGVTSVLLLFIVYAYMYILW. The Cytoplasmic segment spans residues 300 to 344; sequence KAHSHAVRMIQRGTQKSIIIHTSEDGKVQVTRPDQARMDIRLAKT. Residues 345 to 365 traverse the membrane as a helical segment; it reads LVLILVVLIICWGPLLAIMVY. The Extracellular portion of the chain corresponds to 366-377; the sequence is DVFGKMNKLIKT. A helical membrane pass occupies residues 378–399; the sequence is VFAFCSMLCLLNSTVNPIIYAL. Residues 400–472 are Cytoplasmic-facing; that stretch reads RSKDLRHAFR…VSTDTSAEAL (73 aa). A lipid anchor (S-palmitoyl cysteine) is attached at C415. Phosphoserine is present on residues S425 and S429.

It belongs to the G-protein coupled receptor 1 family. In terms of assembly, interacts (via C-terminus) with CNRIP1; this interaction attenuates constitutive, but not agonist-dependent, inhibition of voltage-gated Ca(2+) channels in neurons. Associates with G protein alpha subunits, including G(i) alpha-1/GNAI1, G(i) alpha-3/GNAI3 and G(o)-alpha/GNAO1; palmitoylation is important for interaction with GNAI3 and GNAO1. Post-translationally, palmitoylation at Cys-415 is important for recruitment at plasma membrane and lipid rafts and association with G protein alpha subunits. As to expression, widely expressed, with highest levels in fetal and adult brain. Expression levels of isoform 2 and isoform 3 are much lower than those of isoform 1.

The protein localises to the cell membrane. It is found in the membrane raft. It localises to the mitochondrion outer membrane. Its subcellular location is the cell projection. The protein resides in the axon. The protein localises to the presynapse. Hemopressin, a peptide derived from hemoglobin subunit alpha (HBA1 and/or HBA2), acts as an antagonist peptide: hemopressin-binding efficiently blocks cannabinoid receptor CNR1 and subsequent signaling. G-protein coupled receptor for endogenous cannabinoids (eCBs), including N-arachidonoylethanolamide (also called anandamide or AEA) and 2-arachidonoylglycerol (2-AG), as well as phytocannabinoids, such as delta(9)-tetrahydrocannabinol (THC). Mediates many cannabinoid-induced effects, acting, among others, on food intake, memory loss, gastrointestinal motility, catalepsy, ambulatory activity, anxiety, chronic pain. Signaling typically involves reduction in cyclic AMP. In the hypothalamus, may have a dual effect on mitochondrial respiration depending upon the agonist dose and possibly upon the cell type. Increases respiration at low doses, while decreases respiration at high doses. At high doses, CNR1 signal transduction involves G-protein alpha-i protein activation and subsequent inhibition of mitochondrial soluble adenylate cyclase, decrease in cyclic AMP concentration, inhibition of protein kinase A (PKA)-dependent phosphorylation of specific subunits of the mitochondrial electron transport system, including NDUFS2. In the hypothalamus, inhibits leptin-induced reactive oxygen species (ROS) formation and mediates cannabinoid-induced increase in SREBF1 and FASN gene expression. In response to cannabinoids, drives the release of orexigenic beta-endorphin, but not that of melanocyte-stimulating hormone alpha/alpha-MSH, from hypothalamic POMC neurons, hence promoting food intake. In the hippocampus, regulates cellular respiration and energy production in response to cannabinoids. Involved in cannabinoid-dependent depolarization-induced suppression of inhibition (DSI), a process in which depolarization of CA1 postsynaptic pyramidal neurons mobilizes eCBs, which retrogradely activate presynaptic CB1 receptors, transiently decreasing GABAergic inhibitory neurotransmission. Also reduces excitatory synaptic transmission. In superior cervical ganglions and cerebral vascular smooth muscle cells, inhibits voltage-gated Ca(2+) channels in a constitutive, as well as agonist-dependent manner. In cerebral vascular smooth muscle cells, cannabinoid-induced inhibition of voltage-gated Ca(2+) channels leads to vasodilation and decreased vascular tone. Induces leptin production in adipocytes and reduces LRP2-mediated leptin clearance in the kidney, hence participating in hyperleptinemia. In adipose tissue, CNR1 signaling leads to increased expression of SREBF1, ACACA and FASN genes. In the liver, activation by endocannabinoids leads to increased de novo lipogenesis and reduced fatty acid catabolism, associated with increased expression of SREBF1/SREBP-1, GCK, ACACA, ACACB and FASN genes. May also affect de novo cholesterol synthesis and HDL-cholesteryl ether uptake. Peripherally modulates energy metabolism. In high carbohydrate diet-induced obesity, may decrease the expression of mitochondrial dihydrolipoyl dehydrogenase/DLD in striated muscles, as well as that of selected glucose/ pyruvate metabolic enzymes, hence affecting energy expenditure through mitochondrial metabolism. In response to cannabinoid anandamide, elicits a pro-inflammatory response in macrophages, which involves NLRP3 inflammasome activation and IL1B and IL18 secretion. In macrophages infiltrating pancreatic islets, this process may participate in the progression of type-2 diabetes and associated loss of pancreatic beta-cells. Its function is as follows. Binds both 2-arachidonoylglycerol (2-AG) and anandamide. Functionally, only binds 2-arachidonoylglycerol (2-AG) with high affinity. Contrary to its effect on isoform 1, 2-AG behaves as an inverse agonist on isoform 2 in assays measuring GTP binding to membranes. In terms of biological role, only binds 2-arachidonoylglycerol (2-AG) with high affinity. Contrary to its effect on isoform 1, 2-AG behaves as an inverse agonist on isoform 3 in assays measuring GTP binding to membranes. The chain is Cannabinoid receptor 1 (CNR1) from Homo sapiens (Human).